The following is a 206-amino-acid chain: Platelet glycoprotein Ib beta chain (206 aa).

An N-terminal signal peptide occupies residues Met-1 to Gly-25. 2 disulfides stabilise this stretch: Cys-26/Cys-32 and Cys-30/Cys-39. Residues Pro-27–Val-55 form the LRRNT domain. Topologically, residues Pro-27–Cys-147 are extracellular. Residues Leu-60–Thr-83 form an LRR repeat. Asn-66 carries an N-linked (GlcNAc...) asparagine glycan. The 55-residue stretch at Asn-89–Pro-143 folds into the LRRCT domain. 2 disulfide bridges follow: Cys-93-Cys-118 and Cys-95-Cys-141. A helical membrane pass occupies residues Trp-148–Leu-172. Residues Cys-173–Ser-206 lie on the Cytoplasmic side of the membrane. Ser-191 carries the post-translational modification Phosphoserine; by PKA. Thr-193 is modified (phosphothreonine).

As to quaternary structure, two GP-Ib beta are disulfide-linked to one GP-Ib alpha. GP-IX is complexed with the GP-Ib heterodimer via a non covalent linkage. Interacts with TRAF4. Expressed in heart and brain.

It is found in the membrane. In terms of biological role, gp-Ib, a surface membrane protein of platelets, participates in the formation of platelet plugs by binding to von Willebrand factor, which is already bound to the subendothelium. The polypeptide is Platelet glycoprotein Ib beta chain (GP1BB) (Homo sapiens (Human)).